A 131-amino-acid chain; its full sequence is MAKRNVVAKKKVVKKNIARGVVYISATFNNTNITITDEMGNVICWSTAGGLGFKGSKKSTPYAAQQAVESALSKAKEHGVKEVGIKVQGPGSGRETAIKSVGATEGVKVLWIKDITPLPHNGCRPPKRRRV.

It belongs to the universal ribosomal protein uS11 family. As to quaternary structure, part of the 30S ribosomal subunit. Interacts with proteins S7 and S18. Binds to IF-3.

Functionally, located on the platform of the 30S subunit, it bridges several disparate RNA helices of the 16S rRNA. Forms part of the Shine-Dalgarno cleft in the 70S ribosome. This Helicobacter pylori (strain P12) protein is Small ribosomal subunit protein uS11.